The chain runs to 73 residues: Translation initiation factor IF-1 1 (73 aa).

The S1-like domain occupies 1–72 (MAKEELIEFG…TKGRINFRHK (72 aa)).

Belongs to the IF-1 family. In terms of assembly, component of the 30S ribosomal translation pre-initiation complex which assembles on the 30S ribosome in the order IF-2 and IF-3, IF-1 and N-formylmethionyl-tRNA(fMet); mRNA recruitment can occur at any time during PIC assembly.

It localises to the cytoplasm. In terms of biological role, one of the essential components for the initiation of protein synthesis. Stabilizes the binding of IF-2 and IF-3 on the 30S subunit to which N-formylmethionyl-tRNA(fMet) subsequently binds. Helps modulate mRNA selection, yielding the 30S pre-initiation complex (PIC). Upon addition of the 50S ribosomal subunit IF-1, IF-2 and IF-3 are released leaving the mature 70S translation initiation complex. This is Translation initiation factor IF-1 1 from Cupriavidus metallidurans (strain ATCC 43123 / DSM 2839 / NBRC 102507 / CH34) (Ralstonia metallidurans).